A 295-amino-acid chain; its full sequence is Pyridoxal 5'-phosphate synthase subunit PdxS (295 aa).

Asp-25 contacts D-ribose 5-phosphate. Residue Lys-82 is the Schiff-base intermediate with D-ribose 5-phosphate of the active site. Residue Gly-154 participates in D-ribose 5-phosphate binding. Arg-166 is a D-glyceraldehyde 3-phosphate binding site. Residues Gly-215 and 236-237 (GS) each bind D-ribose 5-phosphate.

The protein belongs to the PdxS/SNZ family. In terms of assembly, in the presence of PdxT, forms a dodecamer of heterodimers.

It catalyses the reaction aldehydo-D-ribose 5-phosphate + D-glyceraldehyde 3-phosphate + L-glutamine = pyridoxal 5'-phosphate + L-glutamate + phosphate + 3 H2O + H(+). The protein operates within cofactor biosynthesis; pyridoxal 5'-phosphate biosynthesis. Catalyzes the formation of pyridoxal 5'-phosphate from ribose 5-phosphate (RBP), glyceraldehyde 3-phosphate (G3P) and ammonia. The ammonia is provided by the PdxT subunit. Can also use ribulose 5-phosphate and dihydroxyacetone phosphate as substrates, resulting from enzyme-catalyzed isomerization of RBP and G3P, respectively. This chain is Pyridoxal 5'-phosphate synthase subunit PdxS, found in Listeria welshimeri serovar 6b (strain ATCC 35897 / DSM 20650 / CCUG 15529 / CIP 8149 / NCTC 11857 / SLCC 5334 / V8).